Here is a 167-residue protein sequence, read N- to C-terminus: NADH-quinone oxidoreductase subunit B (167 aa).

Positions 40, 41, 105, and 135 each coordinate [4Fe-4S] cluster.

It belongs to the complex I 20 kDa subunit family. In terms of assembly, NDH-1 is composed of 14 different subunits. Subunits NuoB, C, D, E, F, and G constitute the peripheral sector of the complex. [4Fe-4S] cluster is required as a cofactor.

It is found in the cell inner membrane. It catalyses the reaction a quinone + NADH + 5 H(+)(in) = a quinol + NAD(+) + 4 H(+)(out). Functionally, NDH-1 shuttles electrons from NADH, via FMN and iron-sulfur (Fe-S) centers, to quinones in the respiratory chain. The immediate electron acceptor for the enzyme in this species is believed to be ubiquinone. Couples the redox reaction to proton translocation (for every two electrons transferred, four hydrogen ions are translocated across the cytoplasmic membrane), and thus conserves the redox energy in a proton gradient. The protein is NADH-quinone oxidoreductase subunit B of Magnetococcus marinus (strain ATCC BAA-1437 / JCM 17883 / MC-1).